The primary structure comprises 32 residues: Apolipophorin-3 (32 aa).

Positions 1–32 (DAPSTTPPQDXEKKAAEFQKTFTEQXNQLANK) are disordered. A compositionally biased stretch (polar residues) spans 20–32 (KTFTEQXNQLANK).

Belongs to the insect apolipophorin-3 family. Equilibrium between a soluble monomer and a bound lipoprotein form. Apolipophorin-3 associates with lipophorin during lipid loading until each particle contains 9 or 14 molecules of apolipophorin-3. In terms of tissue distribution, hemolymph.

It is found in the secreted. Assists in the loading of diacylglycerol, generated from triacylglycerol stores in the fat body through the action of adipokinetic hormone, into lipophorin, the hemolymph lipoprotein. It increases the lipid carrying capacity of lipophorin by covering the expanding hydrophobic surface resulting from diacylglycerol uptake. It thus plays a critical role in the transport of lipids during flight in several species of insects. The chain is Apolipophorin-3 from Diatraea grandiosella (Southwestern corn borer).